A 126-amino-acid polypeptide reads, in one-letter code: Holo-[acyl-carrier-protein] synthase (126 aa).

Residues Asp-9 and Glu-58 each coordinate Mg(2+).

It belongs to the P-Pant transferase superfamily. AcpS family. Requires Mg(2+) as cofactor.

The protein resides in the cytoplasm. The enzyme catalyses apo-[ACP] + CoA = holo-[ACP] + adenosine 3',5'-bisphosphate + H(+). Its function is as follows. Transfers the 4'-phosphopantetheine moiety from coenzyme A to a Ser of acyl-carrier-protein. The sequence is that of Holo-[acyl-carrier-protein] synthase from Enterobacter sp. (strain 638).